Consider the following 193-residue polypeptide: Dephospho-CoA kinase (193 aa).

Residues 5 to 193 (IIGLTGGIAS…KKVERFCETI (189 aa)) form the DPCK domain. ATP is bound at residue 13–18 (ASGKST).

The protein belongs to the CoaE family.

The protein localises to the cytoplasm. The catalysed reaction is 3'-dephospho-CoA + ATP = ADP + CoA + H(+). It functions in the pathway cofactor biosynthesis; coenzyme A biosynthesis; CoA from (R)-pantothenate: step 5/5. Its function is as follows. Catalyzes the phosphorylation of the 3'-hydroxyl group of dephosphocoenzyme A to form coenzyme A. The chain is Dephospho-CoA kinase from Fusobacterium nucleatum subsp. nucleatum (strain ATCC 25586 / DSM 15643 / BCRC 10681 / CIP 101130 / JCM 8532 / KCTC 2640 / LMG 13131 / VPI 4355).